The sequence spans 398 residues: MKRIYVVGTADTKGEELVYLASCVEAAGGRPVLVDVGTRRPTVLVDISAETVAAVHPGGAAAVLSGNDRGTAIAAMGEAFARFLPARDDVAGVVGMGGGGGTSIITAGMRRLPLGLPKVMVSTLASGDVGPYVDVSDIIMMPSVTDMAGLNRVSRVILKNAAEAITAMANRPAEETASKPAIGLTMFGVTTPCVTAIVERLKADHDCLVFHATGTGGRAMEKLADSGLLSGVLDITTTEVCDLVFGGVLPATEDRFGAIARTDLPYVGSVGALDMVNFWAPETVPERYSGRLLYRHNPNVTLMRTTPEECAAIGRWIGAKLNLCSGPLRFLIPERGVSALDIEGGAFFDPAADAALFEALETTVNRSDRRRIERLPLHINDPQFAEAAVAAYRDIANP.

It belongs to the UPF0261 family.

This is UPF0261 protein RA0729 from Rhizobium meliloti (strain 1021) (Ensifer meliloti).